The following is a 127-amino-acid chain: Translation initiation factor 5A (127 aa).

Position 36 is a hypusine (lysine 36).

This sequence belongs to the eIF-5A family.

It localises to the cytoplasm. In terms of biological role, functions by promoting the formation of the first peptide bond. In Halobacterium salinarum (strain ATCC 700922 / JCM 11081 / NRC-1) (Halobacterium halobium), this protein is Translation initiation factor 5A (eif5a).